Consider the following 46-residue polypeptide: EKGFGFISPADGSKDVFVHFSAIQSTSFKTLDEGQRVEFTIEQGQK.

The region spanning Glu-1–Lys-46 is the CSD domain.

As to quaternary structure, homodimer.

The protein resides in the cytoplasm. The polypeptide is Major cold-shock protein (cspA) (Aeromonas salmonicida).